The primary structure comprises 262 residues: Phosphate import ATP-binding protein PstB (262 aa).

The region spanning 16 to 257 (MEARHLSVRY…PSEQRTEDYV (242 aa)) is the ABC transporter domain. Position 48–55 (48–55 (GPSGCGKS)) interacts with ATP.

This sequence belongs to the ABC transporter superfamily. Phosphate importer (TC 3.A.1.7) family. As to quaternary structure, the complex is composed of two ATP-binding proteins (PstB), two transmembrane proteins (PstC and PstA) and a solute-binding protein (PstS).

It is found in the cell inner membrane. It catalyses the reaction phosphate(out) + ATP + H2O = ADP + 2 phosphate(in) + H(+). Functionally, part of the ABC transporter complex PstSACB involved in phosphate import. Responsible for energy coupling to the transport system. The sequence is that of Phosphate import ATP-binding protein PstB from Anaeromyxobacter dehalogenans (strain 2CP-C).